The sequence spans 192 residues: Small ribosomal subunit protein bS16 (192 aa).

A compositionally biased stretch (basic and acidic residues) spans 149–161; that stretch reads EKKAAEAKAKAEA. A disordered region spans residues 149-192; the sequence is EKKAAEAKAKAEAEAAAAAEEATETEETPMEAAAEEAPAAESAE. A compositionally biased stretch (low complexity) spans 178–192; the sequence is MEAAAEEAPAAESAE.

It belongs to the bacterial ribosomal protein bS16 family.

In Porphyromonas gingivalis (strain ATCC 33277 / DSM 20709 / CIP 103683 / JCM 12257 / NCTC 11834 / 2561), this protein is Small ribosomal subunit protein bS16.